Consider the following 546-residue polypeptide: Src substrate cortactin (546 aa).

The interval 1-28 (MWKASAGHAVSITQDDGGADDWETDPDF) is disordered. Over residues 17 to 28 (GGADDWETDPDF) the composition is skewed to acidic residues. 6 Cortactin repeats span residues 80–116 (ASHGYGGKFGVEQDRMDRSAVGHEYQSKLSKHCSQVD), 117–153 (SVRGFGGKFGVQMDRVDQSAVGFEYQGKTEKHASQKD), 154–190 (YSSGFGGKYGVQADRVDKSAVGFDYQGKTEKHESQKD), 191–227 (YSKGFGGKYGIDKDKVDKSAVGFEYQGKTEKHESQKD), 228–264 (YVKGFGGKFGVQTDRQDKCALGWDHQEKLQLHESQKD), and 265–301 (YKTGFGGKFGVQSERQDSSAVGFDYKERLAKHESQQD). N6-acetyllysine is present on residues lysine 87 and lysine 107. Residue serine 113 is modified to Phosphoserine. Position 119 is an omega-N-methylarginine (arginine 119). Residue lysine 124 is modified to N6-acetyllysine. Lysine 144 is modified (N6-acetyllysine; alternate). Residue lysine 144 forms a Glycyl lysine isopeptide (Lys-Gly) (interchain with G-Cter in SUMO1); alternate linkage. Residue lysine 144 forms a Glycyl lysine isopeptide (Lys-Gly) (interchain with G-Cter in SUMO2); alternate linkage. Serine 150 is subject to Phosphoserine. N6-acetyllysine occurs at positions 152, 161, and 171. Position 181 is an N6-acetyllysine; alternate (lysine 181). Lysine 181 is covalently cross-linked (Glycyl lysine isopeptide (Lys-Gly) (interchain with G-Cter in SUMO1); alternate). Residue lysine 181 forms a Glycyl lysine isopeptide (Lys-Gly) (interchain with G-Cter in SUMO2); alternate linkage. N6-acetyllysine occurs at positions 193 and 198. Lysine 218 is covalently cross-linked (Glycyl lysine isopeptide (Lys-Gly) (interchain with G-Cter in SUMO1)). The residue at position 235 (lysine 235) is an N6-acetyllysine. Serine 261 is subject to Phosphoserine. Lysine 272 carries the N6-acetyllysine modification. Position 295 is an N6-acetyllysine; alternate (lysine 295). A Glycyl lysine isopeptide (Lys-Gly) (interchain with G-Cter in SUMO2); alternate cross-link involves residue lysine 295. Residues 302 to 324 (YAKGFGGKYGVQKDRMDKNASTF) form a Cortactin 7; truncated repeat. An N6-acetyllysine mark is found at lysine 304, lysine 309, lysine 314, and lysine 346. A coiled-coil region spans residues 348-401 (SNIRANFENLAKEREQEDRRKAEAERAQRMAKERQEQEEARRKLEEQARAKKQT). The segment at 355–424 (ENLAKEREQE…PPSSPIYEDA (70 aa)) is disordered. Residues 357-396 (LAKEREQEDRRKAEAERAQRMAKERQEQEEARRKLEEQAR) show a composition bias toward basic and acidic residues. Threonine 401 is subject to Phosphothreonine. 4 positions are modified to phosphoserine: serine 405, serine 407, serine 417, and serine 418. 2 positions are modified to phosphotyrosine: tyrosine 421 and tyrosine 442. A Phosphoserine modification is found at serine 443. Tyrosine 466 carries the phosphotyrosine; by FAK1 modification. Tyrosine 482 and tyrosine 485 each carry phosphotyrosine; by SRC. Positions 488 to 546 (DLGITAIALYDYQAAGDDEISFDPDDIITNIEMIDDGWWRGVCKGRYGLFPANYVELRQ) constitute an SH3 domain.

Part of a complex composed of NEDD9, AURKA and CTTN; within the complex NEDD9 acts as a scaffold protein and is required for complex formation. Interacts (via N-terminus) with NEDD9. Identified in a complex containing FGFR4, NCAM1, CDH2, PLCG1, FRS2, SRC, SHC1, GAP43 and CTTN. Forms a complex with ABL1 and MYLK. Interacts with SHANK2 and SHANK3 (via its SH3 domain). Interacts with PLXDC2 and SRCIN1. Interacts with SAMSN1 (via SH3 domain). Interacts (via SH3 domain) with ASAP1 (via Pro-rich region). Interacts (via SH3 domain) with DNM2. Interacts with ACTN1. Interacts with FER. Interacts with KCNA2 (via non-phosphorylated C-terminus). Interacts with FGD1. Interacts with ABL2. Interacts with CTTNBP2NL; this interaction may target CTTN to stress fibers. Interacts with CTTNBP2; this interaction may target CTTN at the cell cortex or dendritic spines. Interacts with KCNH1. Interacts (via SH3 domain) with DIP2A (via N-terminus); the interaction enhances CTTN acetylation and is required for proper synaptic transmission. Interacts with XIRP1 (via N-terminus); the interaction promotes CTTN localization to intercalated disks in cardiomyocytes. In terms of processing, acetylated. Phosphorylated by FER. Phosphorylated in response to FGR activation. Phosphorylation by SRC promotes MYLK binding. Phosphorylated on tyrosine residues in response to CHRM1 activation. Phosphorylated by PTK2/FAK1 in response to cell adhesion. Tyrosine phosphorylation in transformed cells may contribute to cellular growth regulation and transformation. Phosphorylated by PKN2 at both serine and threonine residues in a GTP-bound Rac1-dependent manner in hyaluronan-induced astrocytes and hence down-regulated CTTN ability to associate with filamentous actin. As to expression, expressed at intercalated disks in the heart (at protein level). Expressed in most tissues, except in B-lymphocytes or plasma cells.

It is found in the cytoplasm. The protein resides in the cytoskeleton. The protein localises to the cell projection. It localises to the lamellipodium. Its subcellular location is the ruffle. It is found in the dendrite. The protein resides in the cell membrane. The protein localises to the podosome. It localises to the cell junction. Its subcellular location is the focal adhesion. It is found in the membrane. The protein resides in the clathrin-coated pit. The protein localises to the dendritic spine. It localises to the cell cortex. Its subcellular location is the endoplasmic reticulum. In terms of biological role, contributes to the organization of the actin cytoskeleton and cell shape. Plays a role in the formation of lamellipodia and in cell migration. Plays a role in the regulation of neuron morphology, axon growth and formation of neuronal growth cones. Through its interaction with CTTNBP2, involved in the regulation of neuronal spine density. Plays a role in focal adhesion assembly and turnover. In complex with ABL1 and MYLK regulates cortical actin-based cytoskeletal rearrangement critical to sphingosine 1-phosphate (S1P)-mediated endothelial cell (EC) barrier enhancement. Plays a role in intracellular protein transport and endocytosis, and in modulating the levels of potassium channels present at the cell membrane. Plays a role in receptor-mediated endocytosis via clathrin-coated pits. Required for stabilization of KCNH1 channels at the cell membrane. This Mus musculus (Mouse) protein is Src substrate cortactin (Cttn).